The following is a 456-amino-acid chain: UDP-N-acetylglucosamine 1-carboxyvinyltransferase (456 aa).

34 to 35 provides a ligand contact to phosphoenolpyruvate; the sequence is KN. R104 is a binding site for UDP-N-acetyl-alpha-D-glucosamine. C128 (proton donor) is an active-site residue. C128 bears the 2-(S-cysteinyl)pyruvic acid O-phosphothioketal mark. The UDP-N-acetyl-alpha-D-glucosamine site is built by D319 and I341.

Belongs to the EPSP synthase family. MurA subfamily.

Its subcellular location is the cytoplasm. The catalysed reaction is phosphoenolpyruvate + UDP-N-acetyl-alpha-D-glucosamine = UDP-N-acetyl-3-O-(1-carboxyvinyl)-alpha-D-glucosamine + phosphate. It participates in cell wall biogenesis; peptidoglycan biosynthesis. Its function is as follows. Cell wall formation. Adds enolpyruvyl to UDP-N-acetylglucosamine. This Prochlorococcus marinus (strain AS9601) protein is UDP-N-acetylglucosamine 1-carboxyvinyltransferase.